Consider the following 433-residue polypeptide: Enolase (433 aa).

Residue Gln166 participates in (2R)-2-phosphoglycerate binding. Glu208 (proton donor) is an active-site residue. Residues Asp245, Glu289, and Asp316 each contribute to the Mg(2+) site. Residues Lys341, Arg370, Ser371, and Lys392 each contribute to the (2R)-2-phosphoglycerate site. Residue Lys341 is the Proton acceptor of the active site.

It belongs to the enolase family. Mg(2+) serves as cofactor.

The protein localises to the cytoplasm. It is found in the secreted. It localises to the cell surface. The catalysed reaction is (2R)-2-phosphoglycerate = phosphoenolpyruvate + H2O. It functions in the pathway carbohydrate degradation; glycolysis; pyruvate from D-glyceraldehyde 3-phosphate: step 4/5. Its function is as follows. Catalyzes the reversible conversion of 2-phosphoglycerate (2-PG) into phosphoenolpyruvate (PEP). It is essential for the degradation of carbohydrates via glycolysis. The protein is Enolase of Acetivibrio thermocellus (strain ATCC 27405 / DSM 1237 / JCM 9322 / NBRC 103400 / NCIMB 10682 / NRRL B-4536 / VPI 7372) (Clostridium thermocellum).